The primary structure comprises 278 residues: SPX domain-containing protein 2 (278 aa).

The region spanning 1-162 is the SPX domain; it reads MKFGKSLSSQ…GSMIRLPFVQ (162 aa). Disordered regions lie at residues 191-242 and 255-278; these read PTNE…KSTV and GSST…EPGR.

As to quaternary structure, interacts (via SPX domain) with PHR2 (via C-terminus). Interacts with RLI1 in the nucleus to prevents its positive regulation of leaf inclination during phosphate (Pi) starvation.

Its subcellular location is the nucleus. Its function is as follows. Inhibits PHR2 DNA-binding activity via a phosphate (Pi)-dependent protein interaction. Together with SPX1, plays a negative role in the regulation of leaf inclination by preventing RLI1 transcription factor activity in Pi depleted conditions. This Oryza sativa subsp. indica (Rice) protein is SPX domain-containing protein 2.